Consider the following 340-residue polypeptide: Ketol-acid reductoisomerase (NADP(+)) (340 aa).

The 180-residue stretch at 3–182 folds into the KARI N-terminal Rossmann domain; that stretch reads VQMEYEKDVK…GAARVGLLET (180 aa). NADP(+) contacts are provided by residues 26 to 29, arginine 49, serine 53, and 83 to 86; these read YGSQ and DEIQ. Residue histidine 108 is part of the active site. Position 134 (glycine 134) interacts with NADP(+). Residues 183–328 form the KARI C-terminal knotted domain; it reads TYKEETEEDL…AELRKAMPFV (146 aa). 4 residues coordinate Mg(2+): aspartate 191, glutamate 195, glutamate 227, and glutamate 231. A substrate-binding site is contributed by serine 252.

This sequence belongs to the ketol-acid reductoisomerase family. It depends on Mg(2+) as a cofactor.

It carries out the reaction (2R)-2,3-dihydroxy-3-methylbutanoate + NADP(+) = (2S)-2-acetolactate + NADPH + H(+). The enzyme catalyses (2R,3R)-2,3-dihydroxy-3-methylpentanoate + NADP(+) = (S)-2-ethyl-2-hydroxy-3-oxobutanoate + NADPH + H(+). It functions in the pathway amino-acid biosynthesis; L-isoleucine biosynthesis; L-isoleucine from 2-oxobutanoate: step 2/4. It participates in amino-acid biosynthesis; L-valine biosynthesis; L-valine from pyruvate: step 2/4. Functionally, involved in the biosynthesis of branched-chain amino acids (BCAA). Catalyzes an alkyl-migration followed by a ketol-acid reduction of (S)-2-acetolactate (S2AL) to yield (R)-2,3-dihydroxy-isovalerate. In the isomerase reaction, S2AL is rearranged via a Mg-dependent methyl migration to produce 3-hydroxy-3-methyl-2-ketobutyrate (HMKB). In the reductase reaction, this 2-ketoacid undergoes a metal-dependent reduction by NADPH to yield (R)-2,3-dihydroxy-isovalerate. This chain is Ketol-acid reductoisomerase (NADP(+)), found in Streptococcus thermophilus (strain CNRZ 1066).